The following is a 575-amino-acid chain: Protein AUXIN SIGNALING F-BOX 2 (575 aa).

Residues 1–47 (MNYFPDEVIEHVFDFVTSHKDRNAISLVCKSWYKIERYSRQKVFIGN) form the F-box domain. Lysine 69 is a 1D-myo-inositol hexakisphosphate binding site. The interval 76 to 77 (DF) is interaction with auxin-responsive proteins. 1D-myo-inositol hexakisphosphate is bound by residues 108–109 (KR) and arginine 340. The interval 343 to 348 (PSDLLG) is interaction with auxin-responsive proteins. 396 to 398 (RFR) contacts 1D-myo-inositol hexakisphosphate. The interval 400–404 (CILEP) is interaction with auxin-responsive proteins. Arginine 431 is a binding site for 1D-myo-inositol hexakisphosphate. Residues 459–460 (AF) are interaction with auxin-responsive proteins. 1D-myo-inositol hexakisphosphate is bound by residues 479–480 (KK) and arginine 504.

Part of a SCF (SKP1-cullin-F-box) protein ligase complex. Interacts with Aux/IAA proteins (IAA7) in an auxin-dependent manner. In terms of tissue distribution, ubiquitous, with higher levels in seedlings.

It localises to the nucleus. It functions in the pathway protein modification; protein ubiquitination. Functionally, component of SCF(ASK-cullin-F-box) E3 ubiquitin ligase complexes, which may mediate the ubiquitination and subsequent proteasomal degradation of target proteins. Confers sensitivity to the virulent bacterial pathogen P.syringae. Auxin receptor that mediates Aux/IAA proteins proteasomal degradation and auxin-regulated transcription. Involved in embryogenesis regulation by auxin. This is Protein AUXIN SIGNALING F-BOX 2 (AFB2) from Arabidopsis thaliana (Mouse-ear cress).